The sequence spans 638 residues: Probable glycerol-3-phosphate dehydrogenase, mitochondrial (638 aa).

100–128 contributes to the FAD binding site; the sequence is DLIVIGGGATGTGVALDAQSRGMKVALFE.

The protein belongs to the FAD-dependent glycerol-3-phosphate dehydrogenase family. FAD is required as a cofactor.

It localises to the mitochondrion. The enzyme catalyses a quinone + sn-glycerol 3-phosphate = dihydroxyacetone phosphate + a quinol. It functions in the pathway polyol metabolism; glycerol degradation via glycerol kinase pathway; glycerone phosphate from sn-glycerol 3-phosphate (anaerobic route): step 1/1. In Dictyostelium discoideum (Social amoeba), this protein is Probable glycerol-3-phosphate dehydrogenase, mitochondrial.